The sequence spans 220 residues: Octanoyltransferase (220 aa).

The 182-residue stretch at proline 27 to valine 208 folds into the BPL/LPL catalytic domain. Substrate contacts are provided by residues arginine 66 to histidine 73, alanine 139 to glycine 141, and glycine 152 to alanine 154. Residue cysteine 170 is the Acyl-thioester intermediate of the active site.

Belongs to the LipB family.

Its subcellular location is the cytoplasm. The enzyme catalyses octanoyl-[ACP] + L-lysyl-[protein] = N(6)-octanoyl-L-lysyl-[protein] + holo-[ACP] + H(+). Its pathway is protein modification; protein lipoylation via endogenous pathway; protein N(6)-(lipoyl)lysine from octanoyl-[acyl-carrier-protein]: step 1/2. In terms of biological role, catalyzes the transfer of endogenously produced octanoic acid from octanoyl-acyl-carrier-protein onto the lipoyl domains of lipoate-dependent enzymes. Lipoyl-ACP can also act as a substrate although octanoyl-ACP is likely to be the physiological substrate. This is Octanoyltransferase from Bordetella bronchiseptica (strain ATCC BAA-588 / NCTC 13252 / RB50) (Alcaligenes bronchisepticus).